We begin with the raw amino-acid sequence, 383 residues long: Na(+)/H(+) antiporter NhaA (383 aa).

Transmembrane regions (helical) follow at residues 10-30 (LIGG…NNSP), 56-76 (LMHW…GLEI), 91-111 (IITP…IYLS), 121-141 (GWAI…ALLG), 150-170 (LLVI…IAIF), 174-194 (SLSL…IICN), 206-226 (VVLG…ATLA), 254-274 (PWII…ISFS), 289-308 (IIWG…LAVF), 327-347 (GISL…VLAF), and 355-375 (AIKI…YIVL).

It belongs to the NhaA Na(+)/H(+) (TC 2.A.33) antiporter family.

The protein localises to the cell inner membrane. The catalysed reaction is Na(+)(in) + 2 H(+)(out) = Na(+)(out) + 2 H(+)(in). Its function is as follows. Na(+)/H(+) antiporter that extrudes sodium in exchange for external protons. The chain is Na(+)/H(+) antiporter NhaA from Francisella tularensis subsp. tularensis (strain WY96-3418).